The following is a 126-amino-acid chain: UPF0102 protein gll3754 (126 aa).

This sequence belongs to the UPF0102 family.

This chain is UPF0102 protein gll3754, found in Gloeobacter violaceus (strain ATCC 29082 / PCC 7421).